A 289-amino-acid chain; its full sequence is uncharacterized protein (289 aa).

9 helical membrane passes run 13–32 (INFA…LSGS), 37–59 (LIIS…HLND), 80–99 (IVTE…IFFI), 104–121 (EIAL…WLYS), 141–160 (VFTY…TIFS), 165–183 (VGVV…GFFL), 203–225 (VLSP…FVVI), 235–252 (TSSL…FAIY), and 265–287 (IISS…AIGC).

It localises to the cell membrane. This is an uncharacterized protein from Archaeoglobus fulgidus (strain ATCC 49558 / DSM 4304 / JCM 9628 / NBRC 100126 / VC-16).